The sequence spans 256 residues: MEGEDLGSWLGLGIGGGGYAYGGDDCRRSPSSPSPVQMLFSQHVKEEITRGYDHGRDEEQASGSKIMKGERGARLRVMRSIRNSGGDGSRSRVLSLGDDGGDGGSGSGGGGGTRKKLQLTKEQSTLLEDSFRVHNILSHAQKHELARQLKLKPRQVEVWFQNRRARTKLKQTEVDCEFLKRCCESLTEENKQLKHELMELRRLASAAAAAAGSQLYVQFPRAAAAAMVNVCPSCEKVTVMGGGGGETGKSSSSYSS.

Positions 52-117 (YDHGRDEEQA…GGGGGTRKKL (66 aa)) are disordered. Over residues 102–112 (DGGSGSGGGGG) the composition is skewed to gly residues. Residues 112 to 171 (GTRKKLQLTKEQSTLLEDSFRVHNILSHAQKHELARQLKLKPRQVEVWFQNRRARTKLKQ) constitute a DNA-binding region (homeobox). The leucine-zipper stretch occupies residues 170 to 214 (KQTEVDCEFLKRCCESLTEENKQLKHELMELRRLASAAAAAAGSQ).

It belongs to the HD-ZIP homeobox family. Class II subfamily. As to expression, expressed in roots, leaf sheaths and blades and panicles.

The protein localises to the nucleus. Probable transcription factor. This Oryza sativa subsp. indica (Rice) protein is Homeobox-leucine zipper protein HOX18 (HOX18).